Here is a 381-residue protein sequence, read N- to C-terminus: Selenoprotein P (381 aa).

An N-terminal signal peptide occupies residues 1-19 (MWRSLGLALALCLLPLGGT). N46 is a glycosylation site (N-linked (GlcNAc...) asparagine). Position 59 (U59) is a non-standard amino acid, selenocysteine. 3 N-linked (GlcNAc...) asparagine glycosylation sites follow: N83, N119, and N128. Residues 202-268 (SPHYHHEHHH…ENRDMPGSED (67 aa)) are disordered. Residues 204–217 (HYHHEHHHNHRHQH) are compositionally biased toward basic residues. Positions 218 to 229 (LGSSELSENQQP) are enriched in polar residues. Residues 243-255 (LHHHHKHKGQHRQ) are compositionally biased toward basic residues. A Phosphoserine modification is found at S266. Non-standard amino acids (selenocysteine) are located at U318 and U330. N338 carries an N-linked (GlcNAc...) asparagine glycan. Residues U345, U352, U367, U369, U376, and U378 are each a non-standard amino acid (selenocysteine). The interval 352 to 381 (UQISQQLIPTEASTSURUKNQAKKUEUPSN) is disordered. Over residues 353 to 369 (QISQQLIPTEASTSURU) the composition is skewed to polar residues.

This sequence belongs to the selenoprotein P family. Post-translationally, phosphorylation sites are present in the extracellular medium.

It is found in the secreted. Might be responsible for some of the extracellular antioxidant defense properties of selenium or might be involved in the transport of selenium. May supply selenium to tissues such as brain and testis. The protein is Selenoprotein P of Pongo abelii (Sumatran orangutan).